The primary structure comprises 1208 residues: DNA-directed RNA polymerase subunit beta (1208 aa).

This sequence belongs to the RNA polymerase beta chain family. The RNAP catalytic core consists of 2 alpha, 1 beta, 1 beta' and 1 omega subunit. When a sigma factor is associated with the core the holoenzyme is formed, which can initiate transcription.

The catalysed reaction is RNA(n) + a ribonucleoside 5'-triphosphate = RNA(n+1) + diphosphate. DNA-dependent RNA polymerase catalyzes the transcription of DNA into RNA using the four ribonucleoside triphosphates as substrates. This is DNA-directed RNA polymerase subunit beta from Enterococcus faecium (Streptococcus faecium).